The primary structure comprises 430 residues: MTTLTLNTSLLSSRRILAAFSGGLDSTVLLHQLVLWRERHPDVTLRAIHIHHGLSPHADSWVRHCETVCERWQVPLVVERVTLADNGLGIEAHAREARYRAFAQTLLPGEVLATAQHLDDQCETFLLALKRGSGPAGLSAMGERSPFAGTLLLRPLLRETRKTLEQWAVRHGLCWIEDESNQDDAYDRNFLRLRALPLLQQRWPHFPAAVARSATLCAEQERLLDELLASDLTDCITAEGTLRLSPLMSMSDVRRAAILRRWLAMRNAPMPSRDALERIWQEVALARDDASPCLRFGDHEIRRYQSQLWWIKSVAGQHETTVAWPVWQTPLALPAGLGTVQLVPGGELRRPREEESVSIRFKAPGVLHIVGRNGGRKLKKIWQEQGIPPWRRDTTPLLFYGETLIAAAGVFVTREGAAEDKEGVSLVWHA.

Position 21–26 (21–26) interacts with ATP; sequence SGGLDS.

This sequence belongs to the tRNA(Ile)-lysidine synthase family.

Its subcellular location is the cytoplasm. It carries out the reaction cytidine(34) in tRNA(Ile2) + L-lysine + ATP = lysidine(34) in tRNA(Ile2) + AMP + diphosphate + H(+). Its function is as follows. Ligates lysine onto the cytidine present at position 34 of the AUA codon-specific tRNA(Ile) that contains the anticodon CAU, in an ATP-dependent manner. Cytidine is converted to lysidine, thus changing the amino acid specificity of the tRNA from methionine to isoleucine. This is tRNA(Ile)-lysidine synthase from Salmonella typhimurium (strain LT2 / SGSC1412 / ATCC 700720).